Reading from the N-terminus, the 244-residue chain is Geranylgeranylglyceryl phosphate synthase (244 aa).

The Mg(2+) site is built by D20 and S49. Residues 169-175 (YLEAGSG), 200-201 (GG), and 222-223 (GT) each bind sn-glycerol 1-phosphate.

It belongs to the GGGP/HepGP synthase family. Group II subfamily. Mg(2+) is required as a cofactor.

The protein localises to the cytoplasm. It carries out the reaction sn-glycerol 1-phosphate + (2E,6E,10E)-geranylgeranyl diphosphate = sn-3-O-(geranylgeranyl)glycerol 1-phosphate + diphosphate. It functions in the pathway membrane lipid metabolism; glycerophospholipid metabolism. Its function is as follows. Prenyltransferase that catalyzes the transfer of the geranylgeranyl moiety of geranylgeranyl diphosphate (GGPP) to the C3 hydroxyl of sn-glycerol-1-phosphate (G1P). This reaction is the first ether-bond-formation step in the biosynthesis of archaeal membrane lipids. This is Geranylgeranylglyceryl phosphate synthase from Korarchaeum cryptofilum (strain OPF8).